Reading from the N-terminus, the 548-residue chain is T-complex protein 1 subunit theta (548 aa).

A disordered region spans residues 527–548; sequence QATGGPKPRGPKAQDEDDDGMA.

It belongs to the TCP-1 chaperonin family. Heterooligomeric complex.

Its subcellular location is the cytoplasm. Its function is as follows. Molecular chaperone; assists the folding of proteins upon ATP hydrolysis. Known to play a role, in vitro, in the folding of actin and tubulin. Required for correct subcellular localization of pgl-1. This is T-complex protein 1 subunit theta (cct-8) from Caenorhabditis elegans.